A 103-amino-acid chain; its full sequence is Large ribosomal subunit protein bL21 (103 aa).

Belongs to the bacterial ribosomal protein bL21 family. In terms of assembly, part of the 50S ribosomal subunit. Contacts protein L20.

This protein binds to 23S rRNA in the presence of protein L20. This Mycobacterium sp. (strain JLS) protein is Large ribosomal subunit protein bL21.